A 375-amino-acid chain; its full sequence is PTS system fructose-specific EIIC component (375 aa).

In terms of domain architecture, PTS EIIC type-2 spans 16–370; the sequence is VKEDLMTGVS…KPNFDAKMAA (355 aa). Helical transmembrane passes span 24 to 44, 68 to 88, 93 to 113, 122 to 142, 160 to 180, 203 to 223, 238 to 258, 279 to 299, 301 to 321, and 340 to 360; these read VSFMIPFVTIGGIFLALGYAV, IGVAGLTLMVPVLGAYIAYAI, GLAPGFILSYIIQQGNVLQAA, GSAGAGYLGAIVAGFLAGIVA, VLLIPVATTAVLTPVMLFVLG, AILLGGILGAMMAADMGGPIN, VTAPMAAVMIAGMVPPIGLAL, VLLGFSFITEGAIPYAAADPA, VIPSVVAGSAVAGAASMALGV, and FMFIACILLGSIVTAVIATAI.

The protein localises to the cell membrane. Functionally, the phosphoenolpyruvate-dependent sugar phosphotransferase system (sugar PTS), a major carbohydrate active transport system, catalyzes the phosphorylation of incoming sugar substrates concomitantly with their translocation across the cell membrane. The enzyme II PtfABC PTS system is involved in fructose transport. The polypeptide is PTS system fructose-specific EIIC component (Haloferax volcanii (strain ATCC 29605 / DSM 3757 / JCM 8879 / NBRC 14742 / NCIMB 2012 / VKM B-1768 / DS2) (Halobacterium volcanii)).